Here is a 378-residue protein sequence, read N- to C-terminus: Chaperone protein DnaJ (378 aa).

Positions 5 to 70 (DFYEVLGLSK…QKRAAYDQYG (66 aa)) constitute a J domain. The CR-type zinc-finger motif lies at 133-211 (GITKEIRIPT…CHGDGRVERY (79 aa)). Residues Cys146, Cys149, Cys163, Cys166, Cys185, Cys188, Cys199, and Cys202 each coordinate Zn(2+). CXXCXGXG motif repeat units lie at residues 146 to 153 (CDKCHGSG), 163 to 170 (CSTCHGAG), 185 to 192 (CPTCHGRG), and 199 to 206 (CSKCHGDG).

This sequence belongs to the DnaJ family. In terms of assembly, homodimer. Requires Zn(2+) as cofactor.

It is found in the cytoplasm. Its function is as follows. Participates actively in the response to hyperosmotic and heat shock by preventing the aggregation of stress-denatured proteins and by disaggregating proteins, also in an autonomous, DnaK-independent fashion. Unfolded proteins bind initially to DnaJ; upon interaction with the DnaJ-bound protein, DnaK hydrolyzes its bound ATP, resulting in the formation of a stable complex. GrpE releases ADP from DnaK; ATP binding to DnaK triggers the release of the substrate protein, thus completing the reaction cycle. Several rounds of ATP-dependent interactions between DnaJ, DnaK and GrpE are required for fully efficient folding. Also involved, together with DnaK and GrpE, in the DNA replication of plasmids through activation of initiation proteins. The protein is Chaperone protein DnaJ of Proteus mirabilis (strain HI4320).